Here is a 169-residue protein sequence, read N- to C-terminus: Cilia- and flagella-associated protein 68 (169 aa).

Mn stretches follow at residues 98 to 109 and 139 to 149; these read TTYDTSYNNRRP and KSTYMTSYSKP.

The protein belongs to the CFAP68 family. In terms of assembly, microtubule inner protein component of sperm flagellar doublet microtubules.

It is found in the cytoplasm. It localises to the cytoskeleton. The protein localises to the cilium axoneme. Its subcellular location is the flagellum axoneme. The protein resides in the nucleus. It is found in the cell projection. It localises to the cilium. Microtubule inner protein (MIP) part of the dynein-decorated doublet microtubules (DMTs) in cilia axoneme, which is required for motile cilia beating. In Bos taurus (Bovine), this protein is Cilia- and flagella-associated protein 68 (CFAP68).